The sequence spans 456 residues: N(6)-adenosine-methyltransferase non-catalytic subunit METTL14 (456 aa).

Positions 50–75 (TCRASYDTSAPNAKRKYLDEGETDED) are disordered. 2 interaction with METTL3 regions span residues 135–136 (RD) and 237–238 (SG). The tract at residues 245–254 (RVCLRKWGYR) is positively charged region required for RNA-binding. 2 interaction with METTL3 regions span residues 255-258 (RCED) and 278-287 (KAVFQRTKEH). The segment at 297-298 (KR) is positively charged region required for RNA-binding. An interaction with METTL3 region spans residues 308-312 (NVDID). Residues 393–456 (ERLRPKSPPP…GAHRGGFPPR (64 aa)) are disordered. S399 is subject to Phosphoserine. Positions 409–423 (GGGAPRGGGRGGTSA) are enriched in gly residues. A compositionally biased stretch (basic and acidic residues) spans 425-440 (RGRERNRSNFRGERGG). The segment covering 441 to 450 (FRGGRGGAHR) has biased composition (gly residues).

The protein belongs to the MT-A70-like family. Heterodimer; heterodimerizes with METTL3 to form an antiparallel heterodimer that constitutes an active methyltransferase. Component of the WMM complex, a N6-methyltransferase complex composed of a catalytic subcomplex, named MAC, and of an associated subcomplex, named MACOM. The MAC subcomplex is composed of METTL3 and METTL14. The MACOM subcomplex is composed of WTAP, ZC3H13, CBLL1/HAKAI, VIRMA, and, in some cases of RBM15 (RBM15 or RBM15B).

The protein resides in the nucleus. Its function is as follows. The METTL3-METTL14 heterodimer forms a N6-methyltransferase complex that methylates adenosine residues at the N(6) position of some mRNAs and regulates the circadian clock, differentiation of embryonic stem cells and cortical neurogenesis. In the heterodimer formed with METTL3, METTL14 constitutes the RNA-binding scaffold that recognizes the substrate rather than the catalytic core. N6-methyladenosine (m6A), which takes place at the 5'-[AG]GAC-3' consensus sites of some mRNAs, plays a role in mRNA stability and processing. M6A acts as a key regulator of mRNA stability by promoting mRNA destabilization and degradation. In embryonic stem cells (ESCs), m6A methylation of mRNAs encoding key naive pluripotency-promoting transcripts results in transcript destabilization. M6A regulates spermatogonial differentiation and meiosis and is essential for male fertility and spermatogenesis. M6A also regulates cortical neurogenesis: m6A methylation of transcripts related to transcription factors, neural stem cells, the cell cycle and neuronal differentiation during brain development promotes their destabilization and decay, promoting differentiation of radial glial cells. The protein is N(6)-adenosine-methyltransferase non-catalytic subunit METTL14 of Homo sapiens (Human).